The primary structure comprises 241 residues: 1-(5-phosphoribosyl)-5-[(5-phosphoribosylamino)methylideneamino] imidazole-4-carboxamide isomerase (241 aa).

Aspartate 8 serves as the catalytic Proton acceptor. Residue aspartate 129 is the Proton donor of the active site.

Belongs to the HisA/HisF family.

The protein localises to the cytoplasm. It carries out the reaction 1-(5-phospho-beta-D-ribosyl)-5-[(5-phospho-beta-D-ribosylamino)methylideneamino]imidazole-4-carboxamide = 5-[(5-phospho-1-deoxy-D-ribulos-1-ylimino)methylamino]-1-(5-phospho-beta-D-ribosyl)imidazole-4-carboxamide. It functions in the pathway amino-acid biosynthesis; L-histidine biosynthesis; L-histidine from 5-phospho-alpha-D-ribose 1-diphosphate: step 4/9. In Chloroflexus aurantiacus (strain ATCC 29364 / DSM 637 / Y-400-fl), this protein is 1-(5-phosphoribosyl)-5-[(5-phosphoribosylamino)methylideneamino] imidazole-4-carboxamide isomerase.